Here is a 726-residue protein sequence, read N- to C-terminus: Catalase-peroxidase (726 aa).

A disordered region spans residues 1-33 (MSTSDDIHNTTATGKCPFHQGGHDQSAGGGTTT). A cross-link (tryptophyl-tyrosyl-methioninium (Trp-Tyr) (with M-252)) is located at residues 105 to 226 (WHGAGTYRSI…LGATEMGLIY (122 aa)). The active-site Proton acceptor is the H106. Positions 226–252 (YVNPEGPDHSGEPLSAAAAIRATFGNM) form a cross-link, tryptophyl-tyrosyl-methioninium (Tyr-Met) (with W-105). H267 provides a ligand contact to heme b.

Belongs to the peroxidase family. Peroxidase/catalase subfamily. In terms of assembly, homodimer or homotetramer. The cofactor is heme b. Formation of the three residue Trp-Tyr-Met cross-link is important for the catalase, but not the peroxidase activity of the enzyme.

It catalyses the reaction H2O2 + AH2 = A + 2 H2O. The catalysed reaction is 2 H2O2 = O2 + 2 H2O. Bifunctional enzyme with both catalase and broad-spectrum peroxidase activity. This is Catalase-peroxidase from Escherichia coli (strain UTI89 / UPEC).